Reading from the N-terminus, the 293-residue chain is 4-hydroxy-tetrahydrodipicolinate synthase (293 aa).

Thr-45 contributes to the pyruvate binding site. Tyr-133 acts as the Proton donor/acceptor in catalysis. The active-site Schiff-base intermediate with substrate is Lys-162. A pyruvate-binding site is contributed by Ile-204.

It belongs to the DapA family. Homotetramer; dimer of dimers.

It is found in the cytoplasm. The enzyme catalyses L-aspartate 4-semialdehyde + pyruvate = (2S,4S)-4-hydroxy-2,3,4,5-tetrahydrodipicolinate + H2O + H(+). Its pathway is amino-acid biosynthesis; L-lysine biosynthesis via DAP pathway; (S)-tetrahydrodipicolinate from L-aspartate: step 3/4. Functionally, catalyzes the condensation of (S)-aspartate-beta-semialdehyde [(S)-ASA] and pyruvate to 4-hydroxy-tetrahydrodipicolinate (HTPA). In Chelativorans sp. (strain BNC1), this protein is 4-hydroxy-tetrahydrodipicolinate synthase.